The following is a 524-amino-acid chain: Glutamyl-tRNA(Gln) amidotransferase subunit A, mitochondrial (524 aa).

The Charge relay system role is filled by Lys76. The tract at residues 146–168 is disordered; sequence KQYRGKGSPDSSQEDQEPQWLVA. Ser171 acts as the Charge relay system in catalysis. The active-site Acyl-ester intermediate is the Ser195.

It belongs to the amidase family. GatA subfamily. As to quaternary structure, subunit of the heterotrimeric GatCAB amidotransferase (AdT) complex, composed of A (QRSL1), B (GATB) and C (GATC) subunits.

It is found in the mitochondrion. The enzyme catalyses L-glutamyl-tRNA(Gln) + L-glutamine + ATP + H2O = L-glutaminyl-tRNA(Gln) + L-glutamate + ADP + phosphate + H(+). Its function is as follows. Allows the formation of correctly charged Gln-tRNA(Gln) through the transamidation of misacylated Glu-tRNA(Gln) in the mitochondria. The reaction takes place in the presence of glutamine and ATP through an activated gamma-phospho-Glu-tRNA(Gln). This Ornithorhynchus anatinus (Duckbill platypus) protein is Glutamyl-tRNA(Gln) amidotransferase subunit A, mitochondrial.